The chain runs to 473 residues: Dolichyl-diphosphooligosaccharide--protein glycosyltransferase subunit 1B (473 aa).

An N-terminal signal peptide occupies residues 1–27 (MAPSLSTAVSSLLLLLLLAAAISVSSS). At 28-439 (PPMPEDSIRV…PFQVYYEFNP (412 aa)) the chain is on the lumenal side. N-linked (GlcNAc...) asparagine glycosylation is found at Asn307 and Asn361. A helical transmembrane segment spans residues 440-460 (IFMLAEPLMLISAVFLFFVAC). The Cytoplasmic portion of the chain corresponds to 461-473 (IAYLHMDLSIGKS).

The protein belongs to the OST1 family. Component of the oligosaccharyltransferase (OST) complex.

It is found in the endoplasmic reticulum membrane. It participates in protein modification; protein glycosylation. In terms of biological role, subunit of the oligosaccharyl transferase (OST) complex that catalyzes the initial transfer of a defined glycan (Glc(3)Man(9)GlcNAc(2) in eukaryotes) from the lipid carrier dolichol-pyrophosphate to an asparagine residue within an Asn-X-Ser/Thr consensus motif in nascent polypeptide chains, the first step in protein N-glycosylation. N-glycosylation occurs cotranslationally and the complex associates with the Sec61 complex at the channel-forming translocon complex that mediates protein translocation across the endoplasmic reticulum (ER). All subunits are required for a maximal enzyme activity. This is Dolichyl-diphosphooligosaccharide--protein glycosyltransferase subunit 1B (OST1B) from Oryza sativa subsp. japonica (Rice).